The following is a 205-amino-acid chain: dITP/XTP pyrophosphatase (205 aa).

16 to 21 (TGNPGK) lines the substrate pocket. Residues glutamate 48 and aspartate 77 each contribute to the Mg(2+) site. Residue aspartate 77 is the Proton acceptor of the active site. Residues serine 78, 162–165 (FGYD), lysine 185, and 190–191 (HR) contribute to the substrate site.

It belongs to the HAM1 NTPase family. In terms of assembly, homodimer. The cofactor is Mg(2+).

The catalysed reaction is XTP + H2O = XMP + diphosphate + H(+). The enzyme catalyses dITP + H2O = dIMP + diphosphate + H(+). It catalyses the reaction ITP + H2O = IMP + diphosphate + H(+). Functionally, pyrophosphatase that catalyzes the hydrolysis of nucleoside triphosphates to their monophosphate derivatives, with a high preference for the non-canonical purine nucleotides XTP (xanthosine triphosphate), dITP (deoxyinosine triphosphate) and ITP. Seems to function as a house-cleaning enzyme that removes non-canonical purine nucleotides from the nucleotide pool, thus preventing their incorporation into DNA/RNA and avoiding chromosomal lesions. This is dITP/XTP pyrophosphatase from Erwinia tasmaniensis (strain DSM 17950 / CFBP 7177 / CIP 109463 / NCPPB 4357 / Et1/99).